The sequence spans 144 residues: Gastric inhibitory polypeptide (144 aa).

The signal sequence occupies residues 1-21 (MVALKTCSLLLVLLFLAVGLG). 2 propeptides span residues 22 to 42 (EKEE…PRGP) and 87 to 144 (EARA…LRSQ). Residues 92-112 (ELAGQSQRNEEKEAQGSSLPK) form a disordered region.

This sequence belongs to the glucagon family. In terms of tissue distribution, highly expressed in the duodenum and jejunum.

The protein resides in the secreted. Functionally, potent stimulator of insulin secretion and relatively poor inhibitor of gastric acid secretion. This chain is Gastric inhibitory polypeptide (Gip), found in Rattus norvegicus (Rat).